The sequence spans 1380 residues: Receptor-type adenylate cyclase A (1380 aa).

At 1 to 34 (MAMQIRPSLGGCLRHGGAGDHAARRLSRLRAAKV) the chain is on the cytoplasmic side. A helical membrane pass occupies residues 35–55 (FVPTAVVCVLLCCAPWVMAEI). Residues 56 to 891 (TNDAEREPVY…SHALTPAQRN (836 aa)) lie on the Extracellular side of the membrane. 4 N-linked (GlcNAc...) asparagine glycosylation sites follow: N422, N478, N497, and N567. The chain crosses the membrane as a helical span at residues 892–912 (GLIAGCVVGAVVLIATCTLLL). The Cytoplasmic portion of the chain corresponds to 913–1380 (YCCMDNRNND…NPHYARHAFE (468 aa)). Residues 933-1087 (TLLFTDIESS…DTSNMAARTE (155 aa)) enclose the Guanylate cyclase domain. Residues D938 and D981 each coordinate Mg(2+). The disordered stretch occupies residues 1270–1298 (LAREGDSAAGGVRPRLPGSPVTSLPAGGS).

Belongs to the adenylyl cyclase class-3 family. The cofactor is Mg(2+).

The protein localises to the membrane. The catalysed reaction is ATP = 3',5'-cyclic AMP + diphosphate. Could act as a receptor for an unknown ligand. The sequence is that of Receptor-type adenylate cyclase A (RAC-A) from Leishmania donovani.